We begin with the raw amino-acid sequence, 409 residues long: Evolutionarily conserved signaling intermediate in Toll pathway, mitochondrial (409 aa).

Residues 1 to 26 (MLRRAQCLLRLHGNGGHSLVSRFRNY) constitute a mitochondrion transit peptide. Disordered regions lie at residues 27–53 (ATDE…NLPA) and 383–409 (EEIE…SRQK). Residues 400-409 (QDEHISSRQK) show a composition bias toward basic and acidic residues.

This sequence belongs to the ECSIT family. As to quaternary structure, interacts with Traf6. Associates with mitochondrial complex I assembly intermediates during its biogenesis.

It is found in the cytoplasm. The protein localises to the nucleus. The protein resides in the mitochondrion. As part of the MCIA complex, involved in the assembly of the mitochondrial complex I. Involved in the innate immune response; promotes the production of antibacterial peptides. This Drosophila melanogaster (Fruit fly) protein is Evolutionarily conserved signaling intermediate in Toll pathway, mitochondrial.